A 536-amino-acid chain; its full sequence is RRRRSQGSEVNLTGQGQPCHSCGERCPGFLAHKWRKICQHCQCPWEEHGHTASNQDLERSLCRLVSGSQRDSLCDSSSDSSVEKYAWVPSGLNPVQVHHFFKCFPEKKIPYINSPGEKYRLKQLLHQLPPHDSEARYCCSLQGEEEEELLLLFSQKRRLENLGRGCVRPISGTMSGTVCQQCGHQINVGEVAVFASRAGLGFCWHPQCFTCAQCLELLCDLIYFYQDGKVYCGRHHAELKRPRCLACDEVIFSLECTQAEGFHWHTRHFCCFECECPLGGQRYIMKDQRPFCCSCYERLYAQYCDSCGECIGIDEGQLTYGGQHWHASESCFCCGRCGECLLGRPFLPRHGQIYCSRSCSMLHTKSERPFSPSQMDLSFQKETKDVGTSTNHELEGDSITNCTLAGSRTSLSVIDQTPTQAAPARSLHSSLRGAPKGFSRECPNRRSLPDLSSHTRTPTRVTFQLPSHSEIKESISFSRPSFTSSSSSDEEEGYFLGEPIPLPPFLRSPGYTAPPTHVPTSTRKQKKKKDKSCFLS.

Positions 66 to 175 (SGSQRDSLCD…CVRPISGTMS (110 aa)) constitute a PET domain. LIM zinc-binding domains lie at 177–241 (TVCQ…ELKR), 242–302 (PRCL…LYAQ), and 305–366 (DSCG…HTKS). Positions 418-536 (PTQAAPARSL…KKKDKSCFLS (119 aa)) are disordered. Residues 438 to 448 (FSRECPNRRSL) are compositionally biased toward basic and acidic residues. Residues 450–467 (DLSSHTRTPTRVTFQLPS) are compositionally biased toward polar residues. Residues 474–487 (SISFSRPSFTSSSS) are compositionally biased toward low complexity.

This sequence belongs to the prickle / espinas / testin family. Interacts with vangl2 via its C-terminus. The vangl2-dependent membrane recruitment of prickle3 is a prerequisite for its polarization. Interacts with wtip. Wtip is involved in the recruitment of prickle3 to the basal body.

It localises to the cytoplasm. It is found in the cell membrane. Its subcellular location is the mitochondrion. Functionally, involved in the planar cell polarity (PCP) pathway that is essential for the polarization of epithelial cells during morphogenetic processes, including gastrulation and neurulation. PCP is maintained by two molecular modules, the global and the core modules. Proteins of the core module include the proteins Frizzled (Fz), Disheveled (Dsh), Van Gogh (Vang), Prickle (Pk), Flamingo (Fmi, Celsr) and Diego (Dgo). The core module proteins develop subcellular asymmetry, accumulating in two groups on opposite sides of epithelial cells. Distinct proximal (Vang, Pk and Fmi) and distal (Fz, Dsh, Dgo and Fmi) complexes segregate to opposite sides of the cell, where they interact with the opposite complex in the neighboring cell at or near the adherents junctions. Directional information to orient polarization with respect to the tissue axes is provided by the global module which involves Wnt proteins. Involved in the organization of the basal body. Involved in cilia growth and positioning. Required for proper assembly, stability, and function of mitochondrial membrane ATP synthase (mitochondrial complex V). This chain is Prickle planar cell polarity protein 3-B (prickle3-b), found in Xenopus laevis (African clawed frog).